We begin with the raw amino-acid sequence, 332 residues long: Methionyl-tRNA formyltransferase (332 aa).

124–127 contacts (6S)-5,6,7,8-tetrahydrofolate; that stretch reads SLLP.

The protein belongs to the Fmt family.

The enzyme catalyses L-methionyl-tRNA(fMet) + (6R)-10-formyltetrahydrofolate = N-formyl-L-methionyl-tRNA(fMet) + (6S)-5,6,7,8-tetrahydrofolate + H(+). In terms of biological role, attaches a formyl group to the free amino group of methionyl-tRNA(fMet). The formyl group appears to play a dual role in the initiator identity of N-formylmethionyl-tRNA by promoting its recognition by IF2 and preventing the misappropriation of this tRNA by the elongation apparatus. This is Methionyl-tRNA formyltransferase from Polynucleobacter necessarius subsp. necessarius (strain STIR1).